Reading from the N-terminus, the 66-residue chain is Large ribosomal subunit protein uL29 (66 aa).

The protein belongs to the universal ribosomal protein uL29 family.

The chain is Large ribosomal subunit protein uL29 from Lysinibacillus sphaericus (strain C3-41).